We begin with the raw amino-acid sequence, 29 residues long: Cytochrome b6-f complex subunit 8 (29 aa).

Residues 3–23 traverse the membrane as a helical segment; that stretch reads IVSLGWAFLMVVFSFSLSLVV.

Belongs to the PetN family. The 4 large subunits of the cytochrome b6-f complex are cytochrome b6, subunit IV (17 kDa polypeptide, PetD), cytochrome f and the Rieske protein, while the 4 small subunits are PetG, PetL, PetM and PetN. The complex functions as a dimer.

The protein resides in the plastid. The protein localises to the chloroplast thylakoid membrane. Component of the cytochrome b6-f complex, which mediates electron transfer between photosystem II (PSII) and photosystem I (PSI), cyclic electron flow around PSI, and state transitions. This is Cytochrome b6-f complex subunit 8 from Chlorokybus atmophyticus (Soil alga).